Here is a 527-residue protein sequence, read N- to C-terminus: Catalase (527 aa).

N-acetylalanine is present on Ala-2. Position 9 is a phosphoserine (Ser-9). Catalysis depends on residues His-75 and Asn-148. 4 residues coordinate NADP(+): His-194, Ser-201, Arg-203, and Asn-213. The residue at position 221 (Lys-221) is an N6-succinyllysine. Residue Lys-233 is modified to N6-acetyllysine. NADP(+) contacts are provided by Lys-237, Trp-303, His-305, and Lys-306. Lys-306 carries the post-translational modification N6-acetyllysine; alternate. N6-succinyllysine; alternate is present on Lys-306. Tyr-358 is a heme binding site. A phosphoserine mark is found at Ser-417 and Ser-422. Lys-480 bears the N6-acetyllysine; alternate mark. Lys-480 is modified (N6-succinyllysine; alternate). An N6-acetyllysine modification is found at Lys-499. The residue at position 511 (Thr-511) is a Phosphothreonine. Phosphoserine is present on residues Ser-515 and Ser-517. The Microbody targeting signal; atypical motif lies at 524 to 527 (KANL).

The protein belongs to the catalase family. Homotetramer. Interacts (via microbody targeting signal) with PEX5, monomeric form interacts with PEX5, leading to its translocation into peroxisomes. Heme serves as cofactor. Requires NADP(+) as cofactor.

It is found in the peroxisome matrix. The catalysed reaction is 2 H2O2 = O2 + 2 H2O. Catalyzes the degradation of hydrogen peroxide (H(2)O(2)) generated by peroxisomal oxidases to water and oxygen, thereby protecting cells from the toxic effects of hydrogen peroxide. Promotes growth of cells including T-cells, B-cells, myeloid leukemia cells, melanoma cells, mastocytoma cells and normal and transformed fibroblast cells. In Homo sapiens (Human), this protein is Catalase (CAT).